The sequence spans 476 residues: Casein kinase 1-like protein 7 (476 aa).

In terms of domain architecture, Protein kinase spans 9-278; that stretch reads FKLGKKIGSG…LKRLFRDLFI (270 aa). ATP is bound by residues 15–23 and Lys38; that span reads IGSGSFGEL. Catalysis depends on Asp128, which acts as the Proton acceptor. Disordered regions lie at residues 299–324 and 340–464; these read GSSS…DPIE and PGAV…TRED. The segment covering 357-367 has biased composition (basic and acidic residues); that stretch reads PRDRSRSRNSD. Over residues 382–422 the composition is skewed to low complexity; that stretch reads ANSSSRYRASSSRKAVAASSSRPSSAGGPSESRTSSRLVSS. Gly residues predominate over residues 423 to 432; the sequence is SGGGGSGSGN.

The protein belongs to the protein kinase superfamily. CK1 Ser/Thr protein kinase family. Casein kinase I subfamily. Monomer. Autophosphorylated.

It localises to the cytoplasm. It catalyses the reaction L-seryl-[protein] + ATP = O-phospho-L-seryl-[protein] + ADP + H(+). It carries out the reaction L-threonyl-[protein] + ATP = O-phospho-L-threonyl-[protein] + ADP + H(+). In terms of biological role, casein kinases are operationally defined by their preferential utilization of acidic proteins such as caseins as substrates. It can phosphorylate a large number of proteins. This Arabidopsis thaliana (Mouse-ear cress) protein is Casein kinase 1-like protein 7.